The chain runs to 495 residues: Lysine--tRNA ligase (495 aa).

Mg(2+)-binding residues include Glu406 and Glu413.

It belongs to the class-II aminoacyl-tRNA synthetase family. In terms of assembly, homodimer. Mg(2+) is required as a cofactor.

The protein localises to the cytoplasm. It carries out the reaction tRNA(Lys) + L-lysine + ATP = L-lysyl-tRNA(Lys) + AMP + diphosphate. The sequence is that of Lysine--tRNA ligase from Leptospira interrogans serogroup Icterohaemorrhagiae serovar Lai (strain 56601).